The sequence spans 340 residues: Protein FAM50A-A (340 aa).

Disordered stretches follow at residues 1–22 (MAQYKGAASEAGRAMQLMKKRE) and 123–178 (NLEE…EEEN). Acidic residues predominate over residues 124-146 (LEEDEECEDEEGEEEESDKEDPP). Basic and acidic residues predominate over residues 169–178 (PDRDREEEEN).

It is found in the nucleus. Its function is as follows. Probably involved in the regulation of pre-mRNA splicing. This Xenopus laevis (African clawed frog) protein is Protein FAM50A-A (fam50a-a).